Here is a 496-residue protein sequence, read N- to C-terminus: NADH-quinone oxidoreductase subunit N (496 aa).

A run of 14 helical transmembrane segments spans residues 12 to 32 (LNLI…IILI), 43 to 63 (SLYV…TLGL), 79 to 99 (VSIV…PLAL), 108 to 128 (SYPE…FMVA), 132 to 152 (LILI…LIAL), 166 to 186 (FTMG…IYAL), 207 to 227 (GLMI…AFKL), 257 to 277 (VAAF…GVEW), 280 to 300 (VVIL…ALVQ), 306 to 326 (MLAY…ALDT), 333 to 353 (IFFY…MLWM), 383 to 403 (AVIM…SIFW), 416 to 436 (GYVW…YYYL), and 464 to 484 (AVVG…QPLV).

It belongs to the complex I subunit 2 family. As to quaternary structure, NDH-1 is composed of 14 different subunits. Subunits NuoA, H, J, K, L, M, N constitute the membrane sector of the complex.

It localises to the cell inner membrane. The catalysed reaction is a quinone + NADH + 5 H(+)(in) = a quinol + NAD(+) + 4 H(+)(out). In terms of biological role, NDH-1 shuttles electrons from NADH, via FMN and iron-sulfur (Fe-S) centers, to quinones in the respiratory chain. The immediate electron acceptor for the enzyme in this species is believed to be ubiquinone. Couples the redox reaction to proton translocation (for every two electrons transferred, four hydrogen ions are translocated across the cytoplasmic membrane), and thus conserves the redox energy in a proton gradient. This Sulfurovum sp. (strain NBC37-1) protein is NADH-quinone oxidoreductase subunit N.